A 218-amino-acid polypeptide reads, in one-letter code: Pyridoxine/pyridoxamine 5'-phosphate oxidase (218 aa).

Substrate contacts are provided by residues 14 to 17 (RREY) and Lys72. Residues 67 to 72 (RIVLLK), 82 to 83 (YT), Arg88, Lys89, and Gln111 each bind FMN. Substrate contacts are provided by Tyr129, Arg133, and Ser137. FMN contacts are provided by residues 146-147 (QS) and Trp191. Residue 197–199 (RLH) participates in substrate binding. Arg201 serves as a coordination point for FMN.

This sequence belongs to the pyridoxamine 5'-phosphate oxidase family. As to quaternary structure, homodimer. FMN is required as a cofactor.

The catalysed reaction is pyridoxamine 5'-phosphate + O2 + H2O = pyridoxal 5'-phosphate + H2O2 + NH4(+). It carries out the reaction pyridoxine 5'-phosphate + O2 = pyridoxal 5'-phosphate + H2O2. Its pathway is cofactor metabolism; pyridoxal 5'-phosphate salvage; pyridoxal 5'-phosphate from pyridoxamine 5'-phosphate: step 1/1. It functions in the pathway cofactor metabolism; pyridoxal 5'-phosphate salvage; pyridoxal 5'-phosphate from pyridoxine 5'-phosphate: step 1/1. In terms of biological role, catalyzes the oxidation of either pyridoxine 5'-phosphate (PNP) or pyridoxamine 5'-phosphate (PMP) into pyridoxal 5'-phosphate (PLP). The protein is Pyridoxine/pyridoxamine 5'-phosphate oxidase of Cronobacter sakazakii (strain ATCC BAA-894) (Enterobacter sakazakii).